The primary structure comprises 627 residues: Protein fem-1 homolog B (627 aa).

4 ANK repeats span residues 45 to 74, 87 to 116, 120 to 149, and 153 to 182; these read QRST…VQTQ, DGAT…NVNH, TNST…NISI, and YDNT…DPNA. 3 residues coordinate Zn(2+): histidine 185, cysteine 186, and histidine 218. ANK repeat units lie at residues 186–215 and 218–248; these read CGAT…AIVV and HGMT…DRRS. A TPR repeat occupies 344 to 377; the sequence is SHPIIYRGAVYADNMEFEQCIKLWLHALHLRQKG. 2 ANK repeats span residues 483 to 527 and 531 to 568; these read EGFT…EVNA and EGNS…HTDM.

Belongs to the fem-1 family. As to quaternary structure, component of a CRL2 E3 ubiquitin-protein ligase complex, also named ECS (Elongin BC-CUL2/5-SOCS-box protein) complex, composed of CUL2, Elongin BC (ELOB and ELOC), RBX1 and substrate-specific adapter FEM1B. Homooligomer. Interacts with PPM1F and PHTF1. Interacts with the death domain of FAS/TNFRSF6 and TNFRSF1A. Interacts with CHEK1. Interacts with NKX3-1. In terms of tissue distribution, widely expressed. Highly expressed in testis. Weakly expressed in other tissues.

It localises to the cytoplasm. The protein localises to the nucleus. The protein operates within protein modification; protein ubiquitination. Activity of the CRL2(FEM1B) complex toward FNIP1 is inhibited by BEX family proteins (BEX1, BEX2, BEX3, BEX4 and/or BEX5) in absence of reductive stress. Mechanistically, BEX proteins act as pseudosubstrate inhibitors that associate with FEM1B via zinc in absence of reductive stress, thereby preventing association between FEM1B and FNIP1. Functionally, substrate-recognition component of a Cul2-RING (CRL2) E3 ubiquitin-protein ligase complex of the DesCEND (destruction via C-end degrons) pathway, which recognizes a C-degron located at the extreme C terminus of target proteins, leading to their ubiquitination and degradation. The C-degron recognized by the DesCEND pathway is usually a motif of less than ten residues and can be present in full-length proteins, truncated proteins or proteolytically cleaved forms. The CRL2(FEM1B) complex specifically recognizes proteins ending with -Gly-Leu-Asp-Arg, such as CDK5R1, leading to their ubiquitination and degradation. Also acts as a regulator of the reductive stress response by mediating ubiquitination of reduced FNIP1: in response to reductive stress, the CRL2(FEM1B) complex specifically recognizes a conserved Cys degron in FNIP1 when this degron is reduced, leading to FNIP1 degradation and subsequent activation of mitochondria to recalibrate reactive oxygen species (ROS). Mechanistically, recognizes and binds reduced FNIP1 through two interface zinc ions, which act as a molecular glue that recruit reduced FNIP1 to FEM1B. Promotes ubiquitination of GLI1, suppressing GLI1 transcriptional activator activity. Promotes ubiquitination and degradation of ANKRD37. Promotes ubiquitination and degradation of SLBP. Involved in apoptosis by acting as a death receptor-associated protein that mediates apoptosis. Also involved in glucose homeostasis in pancreatic islet. May also act as an adapter/mediator in replication stress-induced signaling that leads to the activation of CHEK1. The protein is Protein fem-1 homolog B of Homo sapiens (Human).